A 734-amino-acid polypeptide reads, in one-letter code: Phosphoribosylformylglycinamidine synthase subunit PurL (734 aa).

Histidine 49 is a catalytic residue. Residues tyrosine 52 and lysine 91 each coordinate ATP. Residue glutamate 93 coordinates Mg(2+). Residues 94-97 (SHNH) and arginine 116 each bind substrate. The Proton acceptor role is filled by histidine 95. Residue aspartate 117 coordinates Mg(2+). A substrate-binding site is contributed by glutamine 240. Position 268 (aspartate 268) interacts with Mg(2+). 312–314 (ESQ) is a substrate binding site. ATP contacts are provided by aspartate 491 and glycine 528. Asparagine 529 provides a ligand contact to Mg(2+). Residue serine 531 participates in substrate binding.

This sequence belongs to the FGAMS family. As to quaternary structure, monomer. Part of the FGAM synthase complex composed of 1 PurL, 1 PurQ and 2 PurS subunits.

Its subcellular location is the cytoplasm. It catalyses the reaction N(2)-formyl-N(1)-(5-phospho-beta-D-ribosyl)glycinamide + L-glutamine + ATP + H2O = 2-formamido-N(1)-(5-O-phospho-beta-D-ribosyl)acetamidine + L-glutamate + ADP + phosphate + H(+). The protein operates within purine metabolism; IMP biosynthesis via de novo pathway; 5-amino-1-(5-phospho-D-ribosyl)imidazole from N(2)-formyl-N(1)-(5-phospho-D-ribosyl)glycinamide: step 1/2. Its function is as follows. Part of the phosphoribosylformylglycinamidine synthase complex involved in the purines biosynthetic pathway. Catalyzes the ATP-dependent conversion of formylglycinamide ribonucleotide (FGAR) and glutamine to yield formylglycinamidine ribonucleotide (FGAM) and glutamate. The FGAM synthase complex is composed of three subunits. PurQ produces an ammonia molecule by converting glutamine to glutamate. PurL transfers the ammonia molecule to FGAR to form FGAM in an ATP-dependent manner. PurS interacts with PurQ and PurL and is thought to assist in the transfer of the ammonia molecule from PurQ to PurL. The protein is Phosphoribosylformylglycinamidine synthase subunit PurL of Zymomonas mobilis subsp. mobilis (strain ATCC 31821 / ZM4 / CP4).